The chain runs to 164 residues: NADH-quinone oxidoreductase subunit I (164 aa).

4Fe-4S ferredoxin-type domains are found at residues 55–85 (LRRY…IDAE) and 95–124 (TRYD…EGPN). [4Fe-4S] cluster contacts are provided by Cys-65, Cys-68, Cys-71, Cys-75, Cys-104, Cys-107, Cys-110, and Cys-114.

This sequence belongs to the complex I 23 kDa subunit family. As to quaternary structure, NDH-1 is composed of 14 different subunits. Subunits NuoA, H, J, K, L, M, N constitute the membrane sector of the complex. It depends on [4Fe-4S] cluster as a cofactor.

The protein localises to the cell inner membrane. It catalyses the reaction a quinone + NADH + 5 H(+)(in) = a quinol + NAD(+) + 4 H(+)(out). Functionally, NDH-1 shuttles electrons from NADH, via FMN and iron-sulfur (Fe-S) centers, to quinones in the respiratory chain. The immediate electron acceptor for the enzyme in this species is believed to be ubiquinone. Couples the redox reaction to proton translocation (for every two electrons transferred, four hydrogen ions are translocated across the cytoplasmic membrane), and thus conserves the redox energy in a proton gradient. This Jannaschia sp. (strain CCS1) protein is NADH-quinone oxidoreductase subunit I.